Here is a 152-residue protein sequence, read N- to C-terminus: 3-hydroxyacyl-[acyl-carrier-protein] dehydratase FabZ (152 aa).

The active site involves histidine 58.

Belongs to the thioester dehydratase family. FabZ subfamily.

It localises to the cytoplasm. The enzyme catalyses a (3R)-hydroxyacyl-[ACP] = a (2E)-enoyl-[ACP] + H2O. Involved in unsaturated fatty acids biosynthesis. Catalyzes the dehydration of short chain beta-hydroxyacyl-ACPs and long chain saturated and unsaturated beta-hydroxyacyl-ACPs. The sequence is that of 3-hydroxyacyl-[acyl-carrier-protein] dehydratase FabZ from Prochlorococcus marinus (strain AS9601).